Reading from the N-terminus, the 65-residue chain is Sarcoplasmic/endoplasmic reticulum calcium ATPase regulator ARLN (65 aa).

M1 bears the N-acetylmethionine mark. A disordered region spans residues 1 to 36 (MEVSQAASGTDGVRERRGSFEAGRRNQDEAPQSGMN). Positions 12-28 (GVRERRGSFEAGRRNQD) are enriched in basic and acidic residues. S19 bears the Phosphoserine mark. Residues 44–64 (WLDLWLFILFDLALFVFVYLL) form a helical membrane-spanning segment.

Homooligomer. Can also form heterooligomers with other sarcoplasmic/endoplasmic reticulum calcium ATPase (SERCA) regulators ERLN, PLN, SLN and STRIT1/DWORF. Monomer. Interacts as a monomer with ATP2A2/SERCA2; the interaction results in inhibition of ATP2A2 Ca(2+) affinity. As to expression, in the embryo, expressed in heart, epidermal epithelium, salivary gland, brown fat, intestinal epithelium and bladder urothelium.

It localises to the endoplasmic reticulum membrane. Its function is as follows. Inhibits the activity of the calcium ATPases ATP2A2/SERCA2 and ATP2A3/SERCA3 by decreasing their apparent affinity for Ca(2+). In Mus musculus (Mouse), this protein is Sarcoplasmic/endoplasmic reticulum calcium ATPase regulator ARLN (Arln).